Reading from the N-terminus, the 595-residue chain is Apolipoprotein N-acyltransferase 2 (595 aa).

5 helical membrane passes run 30 to 50 (FLAF…FGFF), 63 to 83 (LFFH…HWII), 95 to 115 (VVAI…FPIF), 167 to 187 (AEIT…YTLF), and 210 to 230 (FITL…FLFK). One can recognise a CN hydrolase domain in the interval 241-555 (LNVLIVQPDA…AEALSETIDV (315 aa)). E293 serves as the catalytic Proton acceptor. Residue K372 is part of the active site. C463 acts as the Nucleophile in catalysis. The chain crosses the membrane as a helical span at residues 569-589 (LIPWLMLFLTGIYYLNLLIGI).

This sequence belongs to the CN hydrolase family. Apolipoprotein N-acyltransferase subfamily.

It is found in the cell inner membrane. It catalyses the reaction N-terminal S-1,2-diacyl-sn-glyceryl-L-cysteinyl-[lipoprotein] + a glycerophospholipid = N-acyl-S-1,2-diacyl-sn-glyceryl-L-cysteinyl-[lipoprotein] + a 2-acyl-sn-glycero-3-phospholipid + H(+). The protein operates within protein modification; lipoprotein biosynthesis (N-acyl transfer). Functionally, catalyzes the phospholipid dependent N-acylation of the N-terminal cysteine of apolipoprotein, the last step in lipoprotein maturation. In Leptospira interrogans serogroup Icterohaemorrhagiae serovar Lai (strain 56601), this protein is Apolipoprotein N-acyltransferase 2.